The primary structure comprises 439 residues: Agmatine coumaroyltransferase-1 (439 aa).

Active-site proton acceptor residues include histidine 152 and aspartate 385.

The protein belongs to the plant acyltransferase family. In terms of assembly, monomer.

It carries out the reaction 4-coumaroyl-CoA + agmatine = N-(4-guanidinobutyl)-4-hydroxycinnamamide + CoA + H(+). Its activity is regulated as follows. Inhibited by DEPC. Completely inhibited by ZnSO(4), strongly inhibited by CuSO(4), partially inhibited by MnCl(2). Unaffected by MgCl(2) or CaCl(2). In terms of biological role, involved in the synthesis of hordatines (antifungal hydroxycinnamoylagmatine derivatives). Specific for agmatine as the acyl acceptor, inactive towards tyramine and putrescine. Has activity with the acyl donors 4-coumaroyl-CoA, cinnamoyl-CoA, caffeoyl-CoA, feruloyl-CoA, and to a lesser extent sinapoyl-CoA. The sequence is that of Agmatine coumaroyltransferase-1 (ACT-1) from Hordeum vulgare (Barley).